The primary structure comprises 287 residues: Large ribosomal subunit protein uL2 (287 aa).

2 disordered regions span residues 25-57 and 203-287; these read TKTEPEKSLTTSKHRAKGRNNTGRITSRRRGGG and LSAG…GRES. Composition is skewed to basic residues over residues 209-220 and 259-287; these read GRNRWKGRRPKV and TRNRKKLSSKFIVRRRRKSSKRGRGGRES.

This sequence belongs to the universal ribosomal protein uL2 family. In terms of assembly, part of the 50S ribosomal subunit. Forms a bridge to the 30S subunit in the 70S ribosome.

Its function is as follows. One of the primary rRNA binding proteins. Required for association of the 30S and 50S subunits to form the 70S ribosome, for tRNA binding and peptide bond formation. It has been suggested to have peptidyltransferase activity; this is somewhat controversial. Makes several contacts with the 16S rRNA in the 70S ribosome. This Nostoc punctiforme (strain ATCC 29133 / PCC 73102) protein is Large ribosomal subunit protein uL2.